Reading from the N-terminus, the 120-residue chain is Large ribosomal subunit protein uL18 (120 aa).

A disordered region spans residues M1–G22. Over residues S8–G18 the composition is skewed to basic residues.

It belongs to the universal ribosomal protein uL18 family. In terms of assembly, part of the 50S ribosomal subunit; part of the 5S rRNA/L5/L18/L25 subcomplex. Contacts the 5S and 23S rRNAs.

In terms of biological role, this is one of the proteins that bind and probably mediate the attachment of the 5S RNA into the large ribosomal subunit, where it forms part of the central protuberance. This chain is Large ribosomal subunit protein uL18, found in Nostoc punctiforme (strain ATCC 29133 / PCC 73102).